An 874-amino-acid chain; its full sequence is Alanine--tRNA ligase (874 aa).

Zn(2+) contacts are provided by H565, H569, C666, and H670.

Belongs to the class-II aminoacyl-tRNA synthetase family. Requires Zn(2+) as cofactor.

It localises to the cytoplasm. The catalysed reaction is tRNA(Ala) + L-alanine + ATP = L-alanyl-tRNA(Ala) + AMP + diphosphate. Catalyzes the attachment of alanine to tRNA(Ala) in a two-step reaction: alanine is first activated by ATP to form Ala-AMP and then transferred to the acceptor end of tRNA(Ala). Also edits incorrectly charged Ser-tRNA(Ala) and Gly-tRNA(Ala) via its editing domain. This Polynucleobacter asymbioticus (strain DSM 18221 / CIP 109841 / QLW-P1DMWA-1) (Polynucleobacter necessarius subsp. asymbioticus) protein is Alanine--tRNA ligase.